Reading from the N-terminus, the 135-residue chain is Putative hydrolase EbsB (135 aa).

The RNase H type-1 domain maps to 1 to 128; sequence MLRIYVDAAT…ADMLARQALQ (128 aa). The Mg(2+) site is built by Asp-7, Glu-45, Asp-71, and Asp-120.

It belongs to the RNase H family. EbsB subfamily. Requires Mg(2+) as cofactor.

Its subcellular location is the secreted. The protein localises to the cell wall. Functionally, seems to play some role in the cell surface expression of a chromosomally encoded receptor, named enterococcal binding substance (EBS), that mediates mating aggregate formation. Might interfere with the synthesis or assembly of EBS and function as a cell wall hydrolase. This chain is Putative hydrolase EbsB, found in Enterococcus faecalis (strain ATCC 700802 / V583).